The sequence spans 440 residues: Elongation factor 1-gamma (440 aa).

N-acetylalanine is present on Ala-2. A GST N-terminal domain is found at Ala-2 to Ser-87. In terms of domain architecture, GST C-terminal spans Thr-88–Phe-216. An N6-acetyllysine mark is found at Lys-147 and Lys-212. Residues Phe-221–Ala-257 are compositionally biased toward basic and acidic residues. Positions Phe-221–Asp-267 are disordered. Lys-256 participates in a covalent cross-link: Glycyl lysine isopeptide (Lys-Gly) (interchain with G-Cter in SUMO1). In terms of domain architecture, EF-1-gamma C-terminal spans Ala-279–Lys-440. Lys-288 participates in a covalent cross-link: Glycyl lysine isopeptide (Lys-Gly) (interchain with G-Cter in SUMO2). Residue Lys-404 is modified to N6-acetyllysine. Residue Lys-437 is modified to N6-acetyllysine; alternate. Lys-437 carries the N6-malonyllysine; alternate modification.

As to quaternary structure, EF-1 is composed of four subunits: alpha, beta, delta, and gamma.

Functionally, probably plays a role in anchoring the complex to other cellular components. The protein is Elongation factor 1-gamma (EEF1G) of Bos taurus (Bovine).